The following is a 125-amino-acid chain: Evasin P672 (125 aa).

An N-terminal signal peptide occupies residues 1–21 (MAHKIAIGLVCVLYALHIMSA). N-linked (GlcNAc...) asparagine glycans are attached at residues Asn35, Asn55, Asn65, Asn72, Asn78, Asn104, Asn112, and Asn118. 3 disulfides stabilise this stretch: Cys70-Cys110, Cys87-Cys115, and Cys105-Cys124.

Its subcellular location is the secreted. In terms of biological role, salivary chemokine-binding protein which has chemokine-neutralizing activity and binds to host chemokines CCL1, CCL2, CCL3, CCL3L1, CCL7, CCL8, CCL11, CCL12, CCL13, CCL14, CCL15, CCL16, CCL18 and CCL23. Binds to CCL8 with 1:1 stoichiometry and disrupts CCL8 homodimer formation. This is Evasin P672 from Rhipicephalus pulchellus (Yellow backed tick).